The primary structure comprises 299 residues: Putative activator of 90 kDa heat shock protein ATPase homolog 2 (299 aa).

It belongs to the AHA1 family.

In terms of biological role, co-chaperone that stimulates HSP90 ATPase activity. This Homo sapiens (Human) protein is Putative activator of 90 kDa heat shock protein ATPase homolog 2.